Here is a 34-residue protein sequence, read N- to C-terminus: MEVNILAFIATALFILVPTAFLLIIYVKTVSKSD.

A helical transmembrane segment spans residues 5-25; that stretch reads ILAFIATALFILVPTAFLLII.

This sequence belongs to the PsbM family. As to quaternary structure, PSII is composed of 1 copy each of membrane proteins PsbA, PsbB, PsbC, PsbD, PsbE, PsbF, PsbH, PsbI, PsbJ, PsbK, PsbL, PsbM, PsbT, PsbX, PsbY, PsbZ, Psb30/Ycf12, at least 3 peripheral proteins of the oxygen-evolving complex and a large number of cofactors. It forms dimeric complexes.

Its subcellular location is the plastid. It localises to the chloroplast thylakoid membrane. Functionally, one of the components of the core complex of photosystem II (PSII). PSII is a light-driven water:plastoquinone oxidoreductase that uses light energy to abstract electrons from H(2)O, generating O(2) and a proton gradient subsequently used for ATP formation. It consists of a core antenna complex that captures photons, and an electron transfer chain that converts photonic excitation into a charge separation. This subunit is found at the monomer-monomer interface. This is Photosystem II reaction center protein M from Phaseolus vulgaris (Kidney bean).